The following is a 281-amino-acid chain: Bifunctional protein FolD (281 aa).

Residues 164–166 (GRS) and Ser-189 contribute to the NADP(+) site.

Belongs to the tetrahydrofolate dehydrogenase/cyclohydrolase family. In terms of assembly, homodimer.

It carries out the reaction (6R)-5,10-methylene-5,6,7,8-tetrahydrofolate + NADP(+) = (6R)-5,10-methenyltetrahydrofolate + NADPH. The catalysed reaction is (6R)-5,10-methenyltetrahydrofolate + H2O = (6R)-10-formyltetrahydrofolate + H(+). It participates in one-carbon metabolism; tetrahydrofolate interconversion. Functionally, catalyzes the oxidation of 5,10-methylenetetrahydrofolate to 5,10-methenyltetrahydrofolate and then the hydrolysis of 5,10-methenyltetrahydrofolate to 10-formyltetrahydrofolate. The sequence is that of Bifunctional protein FolD from Enterococcus faecalis (strain ATCC 700802 / V583).